A 312-amino-acid chain; its full sequence is MSDSPSISAEERKRILRERRAAKMAKGNATSRLNTILTQGNSVKDVSSVKSVLDQEPTGATATTTGNHDLDPDHHDIEGFINTPGINASNDSVALSNSEDIDEMFKKIFGGQVPGNGTDGAGSEDPLAQMMKMFSQPGAGTGTNTPFSEDPFSAQPEEFKYQQQLVQYNTYRHQVWKFRFLAVRYFALLANFIYHFYIIGDSISFASSSHQFIRELIPVEPARSFFTLFSTIEVVIIASYYFLGTKEGFFSTATSNNFVVKLLDMGSMVLPQLQQFKTIAVRLLGYYELLAVLLGDLSLVVVLFGLHSVLGN.

Topologically, residues 1–175 (MSDSPSISAE…VQYNTYRHQV (175 aa)) are cytoplasmic. Residues 176 to 196 (WKFRFLAVRYFALLANFIYHF) form a helical membrane-spanning segment. Residues 197–224 (YIIGDSISFASSSHQFIRELIPVEPARS) lie on the Lumenal side of the membrane. Residues 225-244 (FFTLFSTIEVVIIASYYFLG) form a helical membrane-spanning segment. Residues 245–288 (TKEGFFSTATSNNFVVKLLDMGSMVLPQLQQFKTIAVRLLGYYE) are Cytoplasmic-facing. A helical membrane pass occupies residues 289 to 309 (LLAVLLGDLSLVVVLFGLHSV). Over 310 to 312 (LGN) the chain is Lumenal.

It belongs to the GET2 family. In terms of assembly, component of the Golgi to ER traffic (GET) complex, which is composed of GET1, GET2 and GET3. Within the complex, GET1 and GET2 form a heterotetramer which is stabilized by phosphatidylinositol binding and which binds to the GET3 homodimer.

It localises to the endoplasmic reticulum membrane. The protein localises to the golgi apparatus membrane. Required for the post-translational delivery of tail-anchored (TA) proteins to the endoplasmic reticulum. Together with GET1, acts as a membrane receptor for soluble GET3, which recognizes and selectively binds the transmembrane domain of TA proteins in the cytosol. The GET complex cooperates with the HDEL receptor ERD2 to mediate the ATP-dependent retrieval of resident ER proteins that contain a C-terminal H-D-E-L retention signal from the Golgi to the ER. This chain is Golgi to ER traffic protein 2, found in Scheffersomyces stipitis (strain ATCC 58785 / CBS 6054 / NBRC 10063 / NRRL Y-11545) (Yeast).